Here is a 122-residue protein sequence, read N- to C-terminus: MALNIENIIAEIKEASILELNDLVKAIEEEFGVTAAAPVAVAAADAADAGAAKDSFDVELTSAGDKKVGVIKVVREITGLGLKEAKELVDGAPALVKEGVATAEAEEIKAKLEEAGASVTLK.

It belongs to the bacterial ribosomal protein bL12 family. In terms of assembly, homodimer. Part of the ribosomal stalk of the 50S ribosomal subunit. Forms a multimeric L10(L12)X complex, where L10 forms an elongated spine to which 2 to 4 L12 dimers bind in a sequential fashion. Binds GTP-bound translation factors.

Its function is as follows. Forms part of the ribosomal stalk which helps the ribosome interact with GTP-bound translation factors. Is thus essential for accurate translation. This Streptococcus pneumoniae serotype 19F (strain G54) protein is Large ribosomal subunit protein bL12.